A 428-amino-acid chain; its full sequence is Enolase (428 aa).

Glutamine 163 contributes to the (2R)-2-phosphoglycerate binding site. The active-site Proton donor is the glutamate 205. Mg(2+) contacts are provided by aspartate 242, glutamate 285, and aspartate 312. (2R)-2-phosphoglycerate is bound by residues lysine 337, arginine 366, serine 367, and lysine 388. Lysine 337 (proton acceptor) is an active-site residue.

The protein belongs to the enolase family. It depends on Mg(2+) as a cofactor.

It is found in the cytoplasm. Its subcellular location is the secreted. It localises to the cell surface. It carries out the reaction (2R)-2-phosphoglycerate = phosphoenolpyruvate + H2O. The protein operates within carbohydrate degradation; glycolysis; pyruvate from D-glyceraldehyde 3-phosphate: step 4/5. In terms of biological role, catalyzes the reversible conversion of 2-phosphoglycerate (2-PG) into phosphoenolpyruvate (PEP). It is essential for the degradation of carbohydrates via glycolysis. The polypeptide is Enolase (Finegoldia magna (strain ATCC 29328 / DSM 20472 / WAL 2508) (Peptostreptococcus magnus)).